The following is a 920-amino-acid chain: Anillin-related medial ring protein mid1 (920 aa).

The segment at 1–452 (MKEQEFSYRE…LSSEDLRHPS (452 aa)) is disordered. Residues S15 and S24 each carry the phosphoserine modification. T34 carries the post-translational modification Phosphothreonine. A phosphoserine mark is found at S46 and S62. Positions 69–81 (LNVATDLLESLDL) match the Nuclear export sequence (NES) 1 motif. S95 bears the Phosphoserine mark. The segment covering 461–481 (RTYSNYCENEPNKSSQSLVSS) has biased composition (polar residues). S531 is subject to Phosphoserine. Residues 538–561 (DLPSQDKSTSYEVPNGTENQSPRP) are disordered. Residues 542-561 (QDKSTSYEVPNGTENQSPRP) are compositionally biased toward polar residues. The interval 551–920 (PNGTENQSPR…WLQEYVNFMA (370 aa)) is cryptic lipid-binding C2 domain. The short motif at 681–710 (RKFFDKLFNRRKKRKLNKAAAVENSKAKKS) is the Nuclear localization sequence (NLS) element. Residues 763–773 (LGNLTLTCLYI) carry the Nuclear export sequence (NES) 2 motif. Residues 802–901 (LYNEGYLYRL…WLQVMNSRSF (100 aa)) enclose the PH domain.

As to quaternary structure, homodimer. Interacts with blt1 and cdr2. Interacts with gef2. Interacts with plo1 and rng2. Interacts with fhk2 and sep1. Interacts with clp1. Phosphorylated. At the onset of mitosis, becomes hyperphosphorylated, leaves the nucleus, and forms a medial ring. Phosphorylation by plo1 and other kinases may contribute to solubilizing mid1 for export from the nucleus. Phosphorylation by sid2 drives removal from the cortex at the actomyosin contractile ring constriction onset.

It localises to the nucleus. Its subcellular location is the cytoplasm. The protein localises to the cell cortex. The protein resides in the cytoskeleton. Scaffold protein that anchors the contractile ring (CR) at the cell equator during cytokinesis. At the onset of mitosis, membrane-bound oligomers of mid1 assemble recruitment platforms for cytokinetic ring components at the medial cortex and stabilize the ring position during its compaction. Recruits dephosphorylated myo2, but also rng2, clp1 and cdc15 to nodes and to place cytokinetic nodes around the cell equator the medial cortex to promote the ring assembly in cooperation with F-actin. Necessary to stabilize the mitotic spindle perpendicular to the axis of cell division. Also recruits the cdr2 kinase to the CR. Functionally, in the nucleus, binds to the promoter regions of M-G1 transcribed genes to negatively regulate their expression. This is Anillin-related medial ring protein mid1 from Schizosaccharomyces pombe (strain 972 / ATCC 24843) (Fission yeast).